A 201-amino-acid polypeptide reads, in one-letter code: Glycerol-3-phosphate acyltransferase (201 aa).

5 helical membrane passes run 5-25 (LLGALLVAAGYLAGSIPFGVV), 55-75 (KMGVLVLVLDAAKAIVPILVA), 88-108 (WVTAVAVAAFVGHLFPVWLGF), 118-138 (LGIFAVLAPWAALAGLVGYAV), and 164-184 (TYGPRHPISWAGLAIALLIFL).

The protein belongs to the PlsY family. As to quaternary structure, probably interacts with PlsX.

The protein resides in the cell inner membrane. It carries out the reaction an acyl phosphate + sn-glycerol 3-phosphate = a 1-acyl-sn-glycero-3-phosphate + phosphate. The protein operates within lipid metabolism; phospholipid metabolism. Functionally, catalyzes the transfer of an acyl group from acyl-phosphate (acyl-PO(4)) to glycerol-3-phosphate (G3P) to form lysophosphatidic acid (LPA). This enzyme utilizes acyl-phosphate as fatty acyl donor, but not acyl-CoA or acyl-ACP. The chain is Glycerol-3-phosphate acyltransferase from Anaeromyxobacter sp. (strain K).